Consider the following 130-residue polypeptide: MTRLDPLADAMSTLTNGSMLGKREVVINIASKLIGKVLKVLKEHGYIDEFEYVDDGRFGKYVVRLNGRINKAGVIKPRFPVKVGEFSRWEKIYLPAENVGLIIVSTNQGVMTHREAKERGIGGVLIAYCY.

It belongs to the universal ribosomal protein uS8 family. As to quaternary structure, part of the 30S ribosomal subunit.

Its function is as follows. One of the primary rRNA binding proteins, it binds directly to 16S rRNA central domain where it helps coordinate assembly of the platform of the 30S subunit. The polypeptide is Small ribosomal subunit protein uS8 (Korarchaeum cryptofilum (strain OPF8)).